Reading from the N-terminus, the 118-residue chain is Ribulose bisphosphate carboxylase small subunit (118 aa).

This sequence belongs to the RuBisCO small chain family. As to quaternary structure, heterohexadecamer of 8 large and 8 small subunits.

It is found in the carboxysome. Functionally, ruBisCO catalyzes two reactions: the carboxylation of D-ribulose 1,5-bisphosphate, the primary event in carbon dioxide fixation, as well as the oxidative fragmentation of the pentose substrate in the photorespiration process. Both reactions occur simultaneously and in competition at the same active site. Although the small subunit is not catalytic it is essential for maximal activity. In Thermosynechococcus vestitus (strain NIES-2133 / IAM M-273 / BP-1), this protein is Ribulose bisphosphate carboxylase small subunit.